The sequence spans 615 residues: Elongation factor 4 (615 aa).

Residues 14-200 (QQIRNFCIIA…KVAELIPAPT (187 aa)) enclose the tr-type G domain. GTP-binding positions include 26–31 (DHGKST) and 147–150 (NKID).

Belongs to the TRAFAC class translation factor GTPase superfamily. Classic translation factor GTPase family. LepA subfamily.

The protein resides in the cell membrane. It catalyses the reaction GTP + H2O = GDP + phosphate + H(+). Required for accurate and efficient protein synthesis under certain stress conditions. May act as a fidelity factor of the translation reaction, by catalyzing a one-codon backward translocation of tRNAs on improperly translocated ribosomes. Back-translocation proceeds from a post-translocation (POST) complex to a pre-translocation (PRE) complex, thus giving elongation factor G a second chance to translocate the tRNAs correctly. Binds to ribosomes in a GTP-dependent manner. The protein is Elongation factor 4 of Corynebacterium diphtheriae (strain ATCC 700971 / NCTC 13129 / Biotype gravis).